Here is a 442-residue protein sequence, read N- to C-terminus: Elongation factor 1-alpha 1 (442 aa).

The region spanning lysine 5 to lysine 227 is the tr-type G domain. The tract at residues glycine 14–serine 21 is G1. Glycine 14–serine 21 serves as a coordination point for GTP. Positions glycine 70–aspartate 74 are G2. The interval aspartate 91–glycine 94 is G3. GTP-binding positions include aspartate 91–histidine 95 and asparagine 153–aspartate 156. A G4 region spans residues asparagine 153 to aspartate 156. The tract at residues serine 194–phenylalanine 196 is G5.

Belongs to the TRAFAC class translation factor GTPase superfamily. Classic translation factor GTPase family. EF-Tu/EF-1A subfamily.

The protein localises to the cytoplasm. This protein promotes the GTP-dependent binding of aminoacyl-tRNA to the A-site of ribosomes during protein biosynthesis. In Euplotes crassus, this protein is Elongation factor 1-alpha 1 (EFA1).